Consider the following 441-residue polypeptide: Polyketide methyltransferase ustM (441 aa).

The segment at 266 to 368 (LEVGAGLGGT…VRKLLRGGGF (103 aa)) is methyltransferase (CMeT) domain.

This sequence belongs to the methyltransferase superfamily.

Its pathway is secondary metabolite biosynthesis. In terms of biological role, polyketide methyltransferase; part of the gene cluster that mediates the biosynthesis of ustilaginoidins, dimeric gamma-naphthopyrones isolated from different fungal species. The first step in the biosynthesis of ustilaginoidins is the production of gamma-naphthopyrone precursor YWA1 by the non-reducing polyketide synthase ustP, via condensation of one acetyl-CoA starter unit with 6 malonyl-CoA units. YWA1 is then probably substrate of the ustZ to yield norrubrofusarin via a dehydration reaction. A key enzyme in the biosynthetic pathway is the laccase ustL, which catalyzes the oxidative dimerization of norrubrofusarin to ustilaginoidin A. It can produce the M- and P-atropisomers in varying amounts, depending on the reaction conditions. For the biosynthesis of 3-methylustilaginoid in derivatives such as chaetochromin A, a methylated derivative of YWA1 is required. The C-methylation is considered to be catalyzed by ustM, the phosphopantetheine attachment site of which indicates that it acts on the growing polyketide chain before release of the product. For the biosynthesis of chaetochromin A, it is assumed that saturation of the D2 double bond takes place before dimerization, and is probably catalyzed by an external reductase because no candidate gene was identified within the cluster. In Ustilaginoidea virens (Rice false smut fungus), this protein is Polyketide methyltransferase ustM.